The primary structure comprises 273 residues: Dermonecrotic toxin LarSicTox-alphaIB1b (273 aa).

Histidine 5 is an active-site residue. 2 residues coordinate Mg(2+): glutamate 25 and aspartate 27. Histidine 41 acts as the Nucleophile in catalysis. Cystine bridges form between cysteine 45–cysteine 51 and cysteine 47–cysteine 190. Residue aspartate 85 coordinates Mg(2+). N-linked (GlcNAc...) asparagine glycosylation occurs at asparagine 250.

It belongs to the arthropod phospholipase D family. Class II subfamily. The cofactor is Mg(2+). Expressed by the venom gland.

It localises to the secreted. The enzyme catalyses an N-(acyl)-sphingosylphosphocholine = an N-(acyl)-sphingosyl-1,3-cyclic phosphate + choline. It catalyses the reaction an N-(acyl)-sphingosylphosphoethanolamine = an N-(acyl)-sphingosyl-1,3-cyclic phosphate + ethanolamine. It carries out the reaction a 1-acyl-sn-glycero-3-phosphocholine = a 1-acyl-sn-glycero-2,3-cyclic phosphate + choline. The catalysed reaction is a 1-acyl-sn-glycero-3-phosphoethanolamine = a 1-acyl-sn-glycero-2,3-cyclic phosphate + ethanolamine. Its function is as follows. Dermonecrotic toxins cleave the phosphodiester linkage between the phosphate and headgroup of certain phospholipids (sphingolipid and lysolipid substrates), forming an alcohol (often choline) and a cyclic phosphate. This toxin acts on sphingomyelin (SM). It may also act on ceramide phosphoethanolamine (CPE), lysophosphatidylcholine (LPC) and lysophosphatidylethanolamine (LPE), but not on lysophosphatidylserine (LPS), and lysophosphatidylglycerol (LPG). It acts by transphosphatidylation, releasing exclusively cyclic phosphate products as second products. Induces dermonecrosis, hemolysis, increased vascular permeability, edema, inflammatory response, and platelet aggregation. This is Dermonecrotic toxin LarSicTox-alphaIB1b from Loxosceles arizonica (Arizona brown spider).